A 140-amino-acid chain; its full sequence is Hemoglobin subunit beta (140 aa).

Residues 1–140 (GGSDVSAFLA…VGEALAKGYH (140 aa)) form the Globin domain. The heme b site is built by His-57 and His-86.

It belongs to the globin family. Heterotetramer of either two alpha-B chains or two alpha-C chains and two beta chains.

Its function is as follows. The beta chain is a component of adult hemoglobins B. And C. In Aquarana catesbeiana (American bullfrog), this protein is Hemoglobin subunit beta (HBB).